Reading from the N-terminus, the 181-residue chain is Translation initiation factor IF-3 (181 aa).

Belongs to the IF-3 family. As to quaternary structure, monomer.

The protein resides in the cytoplasm. In terms of biological role, IF-3 binds to the 30S ribosomal subunit and shifts the equilibrium between 70S ribosomes and their 50S and 30S subunits in favor of the free subunits, thus enhancing the availability of 30S subunits on which protein synthesis initiation begins. This chain is Translation initiation factor IF-3, found in Azotobacter vinelandii.